The sequence spans 133 residues: Small ribosomal subunit protein uS8 (133 aa).

It belongs to the universal ribosomal protein uS8 family. In terms of assembly, part of the 30S ribosomal subunit. Contacts proteins S5 and S12.

In terms of biological role, one of the primary rRNA binding proteins, it binds directly to 16S rRNA central domain where it helps coordinate assembly of the platform of the 30S subunit. This is Small ribosomal subunit protein uS8 from Oenococcus oeni (strain ATCC BAA-331 / PSU-1).